Reading from the N-terminus, the 231-residue chain is Dephospho-CoA kinase domain-containing protein (231 aa).

One can recognise a DPCK domain in the interval 3 to 207; sequence LVGLTGGIAS…RSLEYLPLRF (205 aa). 8–15 contributes to the ATP binding site; sequence GGIASGKS.

The protein belongs to the CoaE family.

The chain is Dephospho-CoA kinase domain-containing protein (DCAKD) from Homo sapiens (Human).